Consider the following 406-residue polypeptide: Kelch domain-containing protein 2 (406 aa).

Kelch repeat units follow at residues 31–85 (ERSG…NTEG), 92–136 (SGSC…ERID), 148–207 (LGVW…IWSQ), 221–259 (HACATVGNKGFVFGGRYRDARMNDLHYLNLDTWEWNELI), 271–311 (HSLT…IKFN), and 322–359 (HTACASDEGEVIVFGGCANNLLVHHRAAHSNEILIFSV).

In terms of assembly, component of a CRL2(KLHDC2) E3 ubiquitin-protein ligase complex, also named ECS(KLHDC2) complex, composed of CUL2, Elongin BC (ELOB and ELOC), RBX1 and substrate-specific adapter KLHDC2. May form oligomers as a KLHDC2-ELOB-ELOC complex; this interaction is autoinhibitory for the E3 ligase complex as the substrate-binding site of KLHDC2 is blocked in the oligomer. Interacts with CREB3; interaction is direct and specific as it does not interact with CREB1, ATF4, ATF6, JUN, FOS, CEBPA or herpes simplex virus transactivator VP16. Post-translationally, autoubiquitinated by the CRL2(KLHDC2) E3 ligase complex.

Its subcellular location is the nucleus. It participates in protein modification; protein ubiquitination. Functionally, substrate-recognition component of a Cul2-RING (CRL2) E3 ubiquitin-protein ligase complex of the DesCEND (destruction via C-end degrons) pathway, which recognizes a C-degron located at the extreme C terminus of target proteins, leading to their ubiquitination and degradation. The C-degron recognized by the DesCEND pathway is usually a motif of less than ten residues and can be present in full-length proteins, truncated proteins or proteolytically cleaved forms. The CRL2(KLHDC2) complex specifically recognizes proteins with a diglycine (Gly-Gly) at the C-terminus, leading to their ubiquitination and degradation. The CRL2(KLHDC2) complex mediates ubiquitination and degradation of truncated SELENOK and SELENOS selenoproteins produced by failed UGA/Sec decoding, which end with a diglycine. The CRL2(KLHDC2) complex also recognizes proteolytically cleaved proteins ending with Gly-Gly, such as the N-terminal fragment of USP1, leading to their degradation. May also act as an indirect repressor of CREB3-mediated transcription by interfering with CREB3-DNA-binding. In Bos taurus (Bovine), this protein is Kelch domain-containing protein 2.